Reading from the N-terminus, the 67-residue chain is Large ribosomal subunit protein uL29 (67 aa).

The protein belongs to the universal ribosomal protein uL29 family.

The chain is Large ribosomal subunit protein uL29 from Agathobacter rectalis (strain ATCC 33656 / DSM 3377 / JCM 17463 / KCTC 5835 / VPI 0990) (Eubacterium rectale).